Consider the following 149-residue polypeptide: Large ribosomal subunit protein eL24B (149 aa).

Position 50 is a phosphoserine (Ser-50). Residues 96 to 149 (QRPEVRAAARAAALKQRKDKRAASESEKKAIKAKSAASSARGQAIKNAKVAARR) are disordered. The segment covering 116–125 (RAASESEKKA) has biased composition (basic and acidic residues).

Belongs to the eukaryotic ribosomal protein eL24 family. In terms of assembly, component of the large ribosomal subunit (LSU). Mature yeast ribosomes consist of a small (40S) and a large (60S) subunit. The 40S small subunit contains 1 molecule of ribosomal RNA (18S rRNA) and at least 33 different proteins. The large 60S subunit contains 3 rRNA molecules (25S, 5.8S and 5S rRNA) and at least 46 different proteins.

The protein resides in the cytoplasm. Component of the ribosome, a large ribonucleoprotein complex responsible for the synthesis of proteins in the cell. The small ribosomal subunit (SSU) binds messenger RNAs (mRNAs) and translates the encoded message by selecting cognate aminoacyl-transfer RNA (tRNA) molecules. The large subunit (LSU) contains the ribosomal catalytic site termed the peptidyl transferase center (PTC), which catalyzes the formation of peptide bonds, thereby polymerizing the amino acids delivered by tRNAs into a polypeptide chain. The nascent polypeptides leave the ribosome through a tunnel in the LSU and interact with protein factors that function in enzymatic processing, targeting, and the membrane insertion of nascent chains at the exit of the ribosomal tunnel. The chain is Large ribosomal subunit protein eL24B (rpl2402) from Schizosaccharomyces pombe (strain 972 / ATCC 24843) (Fission yeast).